The sequence spans 419 residues: Transcription termination factor Rho (419 aa).

One can recognise a Rho RNA-BD domain in the interval 48–123; the sequence is DIFGDGVLEI…LKVNKVNYDK (76 aa). RNA-binding regions lie at residues 61 to 66, 78 to 80, and 108 to 110; these read GFGFLR, DIY, and ERY. ATP contacts are provided by residues 169 to 174, 181 to 186, and arginine 212; these read GRGQRG and KAGKTM. An RNA-binding 2 region spans residues 284 to 288; it reads VLTGG.

This sequence belongs to the Rho family. As to quaternary structure, homohexamer. The homohexamer assembles into an open ring structure.

Functionally, facilitates transcription termination by a mechanism that involves Rho binding to the nascent RNA, activation of Rho's RNA-dependent ATPase activity, and release of the mRNA from the DNA template. This is Transcription termination factor Rho from Buchnera aphidicola subsp. Baizongia pistaciae (strain Bp).